Here is a 407-residue protein sequence, read N- to C-terminus: Carbamoyl phosphate synthase small chain (407 aa).

Residues 1–203 (MSQNESGTIA…EPCGEYEGKE (203 aa)) form a CPSase region. L-glutamine-binding residues include serine 61, glycine 255, and glycine 257. The 199-residue stretch at 207 to 405 (TVAAVDLGIK…CELMKNNSKE (199 aa)) folds into the Glutamine amidotransferase type-1 domain. Residue cysteine 283 is the Nucleophile of the active site. Positions 284, 287, 325, 327, and 328 each coordinate L-glutamine. Residues histidine 378 and glutamate 380 contribute to the active site.

The protein belongs to the CarA family. As to quaternary structure, composed of two chains; the small (or glutamine) chain promotes the hydrolysis of glutamine to ammonia, which is used by the large (or ammonia) chain to synthesize carbamoyl phosphate. Tetramer of heterodimers (alpha,beta)4.

It catalyses the reaction hydrogencarbonate + L-glutamine + 2 ATP + H2O = carbamoyl phosphate + L-glutamate + 2 ADP + phosphate + 2 H(+). It carries out the reaction L-glutamine + H2O = L-glutamate + NH4(+). It functions in the pathway amino-acid biosynthesis; L-arginine biosynthesis; carbamoyl phosphate from bicarbonate: step 1/1. It participates in pyrimidine metabolism; UMP biosynthesis via de novo pathway; (S)-dihydroorotate from bicarbonate: step 1/3. In terms of biological role, small subunit of the glutamine-dependent carbamoyl phosphate synthetase (CPSase). CPSase catalyzes the formation of carbamoyl phosphate from the ammonia moiety of glutamine, carbonate, and phosphate donated by ATP, constituting the first step of 2 biosynthetic pathways, one leading to arginine and/or urea and the other to pyrimidine nucleotides. The small subunit (glutamine amidotransferase) binds and cleaves glutamine to supply the large subunit with the substrate ammonia. The sequence is that of Carbamoyl phosphate synthase small chain from Bifidobacterium longum (strain DJO10A).